We begin with the raw amino-acid sequence, 260 residues long: 3'-5' ssDNA/RNA exonuclease TatD (260 aa).

Positions 91, 127, and 152 each coordinate a divalent metal cation.

This sequence belongs to the metallo-dependent hydrolases superfamily. TatD-type hydrolase family. TatD subfamily. As to quaternary structure, monomer. Mg(2+) is required as a cofactor.

It localises to the cytoplasm. Functionally, 3'-5' exonuclease that prefers single-stranded DNA and RNA. May play a role in the H(2)O(2)-induced DNA damage repair. The chain is 3'-5' ssDNA/RNA exonuclease TatD from Enterobacter lignolyticus (strain SCF1).